Reading from the N-terminus, the 145-residue chain is Basic phospholipase A2 beta-bungarotoxin A-AL1 chain (145 aa).

An N-terminal signal peptide occupies residues 1–17 (MLIFLWCGAVCVSLLGA). The propeptide occupies 18–25 (ANIPPHPL). 5 cysteine pairs are disulfide-bonded: Cys-52–Cys-144, Cys-54–Cys-70, Cys-76–Cys-118, Cys-86–Cys-111, and Cys-104–Cys-116. Ca(2+)-binding residues include Tyr-53, Gly-55, and Gly-57. His-73 is a catalytic residue. Asp-119 is a catalytic residue.

The protein belongs to the phospholipase A2 family. Group I subfamily. G49 sub-subfamily. Heterodimer; disulfide-linked. The A chains have phospholipase A2 activity and the B chains show homology with the basic protease inhibitors. The cofactor is Ca(2+). Post-translationally, this enzyme lacks one of the seven disulfide bonds found in similar PLA2 proteins. Expressed by the venom gland.

Its subcellular location is the secreted. The enzyme catalyses a 1,2-diacyl-sn-glycero-3-phosphocholine + H2O = a 1-acyl-sn-glycero-3-phosphocholine + a fatty acid + H(+). In terms of biological role, snake venom phospholipase A2 (PLA2) that inhibits neuromuscular transmission by blocking acetylcholine release from the nerve termini. PLA2 catalyzes the calcium-dependent hydrolysis of the 2-acyl groups in 3-sn-phosphoglycerides. The chain is Basic phospholipase A2 beta-bungarotoxin A-AL1 chain from Bungarus multicinctus (Many-banded krait).